The chain runs to 79 residues: MNLILAILLMVVCLLAGFFLGTWFSQRQTKKLLMDNPPLNEDAVRLMMGSMGRKPSEVQVQQVLRQIRAAAKQSDTNKK.

A helical membrane pass occupies residues 4–24 (ILAILLMVVCLLAGFFLGTWF).

It belongs to the UPF0154 family.

It localises to the cell membrane. This Lactococcus lactis subsp. cremoris (strain MG1363) protein is UPF0154 protein llmg_1186.